A 252-amino-acid chain; its full sequence is 3-dehydroquinate dehydratase (252 aa).

3-dehydroquinate contacts are provided by residues 46–48 (EWR) and Arg82. Residue His143 is the Proton donor/acceptor of the active site. Lys170 acts as the Schiff-base intermediate with substrate in catalysis. Arg212, Ser231, and Gln235 together coordinate 3-dehydroquinate.

The protein belongs to the type-I 3-dehydroquinase family. As to quaternary structure, homodimer.

The catalysed reaction is 3-dehydroquinate = 3-dehydroshikimate + H2O. It participates in metabolic intermediate biosynthesis; chorismate biosynthesis; chorismate from D-erythrose 4-phosphate and phosphoenolpyruvate: step 3/7. Its function is as follows. Involved in the third step of the chorismate pathway, which leads to the biosynthesis of aromatic amino acids. Catalyzes the cis-dehydration of 3-dehydroquinate (DHQ) and introduces the first double bond of the aromatic ring to yield 3-dehydroshikimate. The polypeptide is 3-dehydroquinate dehydratase (Listeria monocytogenes serotype 4b (strain CLIP80459)).